We begin with the raw amino-acid sequence, 57 residues long: Probable mRNA interferase HicA 1 (57 aa).

Belongs to the HicA mRNA interferase family. Probably forms a complex with the cognate antitoxin HicB 1 which inhibits the mRNA interferase activity.

Toxic component of a type II toxin-antitoxin (TA) system. A probable translation-independent mRNA interferase. In Photorhabdus laumondii subsp. laumondii (strain DSM 15139 / CIP 105565 / TT01) (Photorhabdus luminescens subsp. laumondii), this protein is Probable mRNA interferase HicA 1 (hicA1).